We begin with the raw amino-acid sequence, 1461 residues long: DNA topoisomerase 2 (1461 aa).

Residues 1 to 17 (MSESESDYFTDGSEDDF) show a composition bias toward acidic residues. Residues 1–61 (MSESESDYFT…TPKPTNASET (61 aa)) are disordered. Residues 41–52 (TNSTVSSSRSST) are compositionally biased toward low complexity. Residues Asn120, Asn149, 177-179 (SSN), and 190-197 (GRNGFGAK) contribute to the ATP site. Residues 382–389 (SKKEKGKK) are interaction with DNA. 418 to 420 (QTK) is a binding site for ATP. Positions 498-614 (CTLILTEGLS…GLLDIPGFLL (117 aa)) constitute a Toprim domain. The Mg(2+) site is built by Glu504, Asp583, and Asp585. A Topo IIA-type catalytic domain is found at 752–1226 (IPSVLDGFKP…SAKDLWNQDL (475 aa)). Tyr842 acts as the O-(5'-phospho-DNA)-tyrosine intermediate in catalysis. Positions 1024–1033 (KLVSSLSLAN) are interaction with DNA. Disordered stretches follow at residues 1122 to 1155 (DGKP…DVGN) and 1244 to 1461 (RESL…IVDE). Positions 1133–1153 (LTGDDADEEEETQEQEGDEDV) are enriched in acidic residues. The span at 1251 to 1261 (GKKKSTKRRAK) shows a compositional bias: basic residues. Composition is skewed to basic and acidic residues over residues 1274-1283 (VKVEPKEKKS) and 1406-1417 (DKPEPKERRTRE). Residues 1434-1461 (DSDDEDEDEEDDIVMSDGDDDDDFIVDE) are compositionally biased toward acidic residues.

It belongs to the type II topoisomerase family. In terms of assembly, homodimer. It depends on Mg(2+) as a cofactor. Requires Mn(2+) as cofactor. Ca(2+) is required as a cofactor.

It localises to the nucleus. It carries out the reaction ATP-dependent breakage, passage and rejoining of double-stranded DNA.. Its function is as follows. Control of topological states of DNA by transient breakage and subsequent rejoining of DNA strands. Topoisomerase II makes double-strand breaks. This Candida albicans (Yeast) protein is DNA topoisomerase 2 (TOP2).